The chain runs to 104 residues: Large ribosomal subunit protein bL21 (104 aa).

This sequence belongs to the bacterial ribosomal protein bL21 family. As to quaternary structure, part of the 50S ribosomal subunit. Contacts protein L20.

In terms of biological role, this protein binds to 23S rRNA in the presence of protein L20. In Francisella tularensis subsp. tularensis (strain FSC 198), this protein is Large ribosomal subunit protein bL21.